Reading from the N-terminus, the 231-residue chain is Lipoprotein-releasing system ATP-binding protein LolD (231 aa).

Residues 6–231 (LQVQAVSKSY…YLQAVAEHAQ (226 aa)) enclose the ABC transporter domain. Residue 42 to 49 (GTSGSGKS) participates in ATP binding.

Belongs to the ABC transporter superfamily. Lipoprotein translocase (TC 3.A.1.125) family. As to quaternary structure, the complex is composed of two ATP-binding proteins (LolD) and two transmembrane proteins (LolC and LolE).

It localises to the cell inner membrane. Part of the ABC transporter complex LolCDE involved in the translocation of mature outer membrane-directed lipoproteins, from the inner membrane to the periplasmic chaperone, LolA. Responsible for the formation of the LolA-lipoprotein complex in an ATP-dependent manner. In Shewanella sp. (strain MR-7), this protein is Lipoprotein-releasing system ATP-binding protein LolD.